Here is a 189-residue protein sequence, read N- to C-terminus: UPF0301 protein CAB604 (189 aa).

The protein belongs to the UPF0301 (AlgH) family.

The polypeptide is UPF0301 protein CAB604 (Chlamydia abortus (strain DSM 27085 / S26/3) (Chlamydophila abortus)).